The sequence spans 198 residues: Protein FAM219B (198 aa).

Disordered stretches follow at residues 1-58 (MATA…KRGP) and 83-146 (RRKG…EQVN). Phosphoserine is present on residues Ser-14, Ser-91, Ser-125, and Ser-127. Positions 134–146 (RYSSGYSSAEQVN) are enriched in polar residues.

This sequence belongs to the FAM219 family.

This chain is Protein FAM219B (FAM219B), found in Homo sapiens (Human).